A 503-amino-acid polypeptide reads, in one-letter code: Cytochrome P450 3A17 (503 aa).

Heme is bound at residue Cys442.

The protein belongs to the cytochrome P450 family. Requires heme as cofactor.

It localises to the endoplasmic reticulum membrane. The protein resides in the microsome membrane. It carries out the reaction an organic molecule + reduced [NADPH--hemoprotein reductase] + O2 = an alcohol + oxidized [NADPH--hemoprotein reductase] + H2O + H(+). Cytochromes P450 are a group of heme-thiolate monooxygenases. In liver microsomes, this enzyme is involved in an NADPH-dependent electron transport pathway. It oxidizes a variety of structurally unrelated compounds, including steroids, fatty acids, and xenobiotics. The sequence is that of Cytochrome P450 3A17 (CYP3A17) from Cavia porcellus (Guinea pig).